The primary structure comprises 317 residues: Melanocyte-stimulating hormone receptor (317 aa).

Residues 1–37 (MPVQGSQRRLLGSLNSTPTATPRLGLAANQTGARCLE) lie on the Extracellular side of the membrane. N29 is a glycosylation site (N-linked (GlcNAc...) asparagine). Residues 38–63 (VSIPDGLFLSLGLVSLVENVLVVVAI) form a helical membrane-spanning segment. Topologically, residues 64-72 (ARNRNLHSP) are cytoplasmic. The chain crosses the membrane as a helical span at residues 73-93 (MYCFICCLALSDLLVSGSNML). At 94–118 (ETAVILLLEAGALAARAAVVQQLDN) the chain is on the extracellular side. Residues 119 to 140 (VIDVITCSSMLSSLCFLGAIAV) traverse the membrane as a helical segment. Residues 141 to 163 (DRYISIFYALRYHSIVTLRRARR) are Cytoplasmic-facing. A helical membrane pass occupies residues 164–183 (VVAAIWVASVLFSTLFIAYC). Over 184-191 (DHAAVLLS) the chain is Extracellular. Residues 192-211 (LVVFFLAMLVLMAVLYVHML) traverse the membrane as a helical segment. Topologically, residues 212 to 240 (ARACQHAQGIAQLHKRQRPAHQGVGLKGA) are cytoplasmic. Residues 241–266 (ATLTILLGIFFLCWGPFFLHLTLIVL) form a helical membrane-spanning segment. Over 267 to 279 (CPQHPTCSCIFKN) the chain is Extracellular. The chain crosses the membrane as a helical span at residues 280–300 (FNLFLTLIICNAIIDPLIYAF). Topologically, residues 301–317 (RSQELRRTLKKVLLCSW) are cytoplasmic. Residue C315 is the site of S-palmitoyl cysteine attachment.

The protein belongs to the G-protein coupled receptor 1 family. Interacts with MGRN1, but does not undergo MGRN1-mediated ubiquitination; this interaction competes with GNAS-binding and thus inhibits agonist-induced cAMP production. Interacts with OPN3; the interaction results in a decrease in MC1R-mediated cAMP signaling and ultimately a decrease in melanin production in melanocytes.

The protein resides in the cell membrane. In terms of biological role, receptor for MSH (alpha, beta and gamma) and ACTH. The activity of this receptor is mediated by G proteins which activate adenylate cyclase. Mediates melanogenesis, the production of eumelanin (black/brown) and phaeomelanin (red/yellow), via regulation of cAMP signaling in melanocytes. In Trachypithecus auratus (Javan langur), this protein is Melanocyte-stimulating hormone receptor (MC1R).